Here is a 61-residue protein sequence, read N- to C-terminus: Protein TfaX (61 aa).

It belongs to the tfa family.

In terms of biological role, might play a role in cell growth during glycolysis. This is Protein TfaX (tfaX) from Escherichia coli (strain K12).